The primary structure comprises 702 residues: Polyribonucleotide nucleotidyltransferase (702 aa).

2 residues coordinate Mg(2+): Asp485 and Asp491. In terms of domain architecture, KH spans 552–612 (PRTEIICIDP…EGVKKAISII (61 aa)). The S1 motif domain occupies 622-690 (GEIYLGKVTK…NQGRINLSRK (69 aa)).

The protein belongs to the polyribonucleotide nucleotidyltransferase family. Requires Mg(2+) as cofactor.

It localises to the cytoplasm. It catalyses the reaction RNA(n+1) + phosphate = RNA(n) + a ribonucleoside 5'-diphosphate. Its function is as follows. Involved in mRNA degradation. Catalyzes the phosphorolysis of single-stranded polyribonucleotides processively in the 3'- to 5'-direction. This chain is Polyribonucleotide nucleotidyltransferase, found in Clostridium botulinum (strain Loch Maree / Type A3).